Consider the following 1349-residue polypeptide: Nitric oxide synthase (1349 aa).

Positions 23–195 (AQQQQQQQQQ…QPRKMSQDYR (173 aa)) are disordered. Composition is skewed to low complexity over residues 24-51 (QQQQ…TQQQ) and 64-73 (LNGNGLLSGN). Residues 142-159 (SGSGSGSGGGGVGVGQGA) are compositionally biased toward gly residues. Residues 165–189 (GSCTASGKSSRELSPSPKNQQQPRK) show a composition bias toward polar residues. S250 contacts (6R)-L-erythro-5,6,7,8-tetrahydrobiopterin. C328 provides a ligand contact to heme b. Positions 391, 500, 501, 505, and 510 each coordinate L-arginine. (6R)-L-erythro-5,6,7,8-tetrahydrobiopterin contacts are provided by W591 and F604. Heme b is bound at residue Y619. Residues 641-661 (PRRKFNFKQIARAVKFTSKLF) form a calmodulin-binding region. The 198-residue stretch at 671 to 868 (ATVLYATETG…SFRKWAPEVF (198 aa)) folds into the Flavodoxin-like domain. 814 to 845 (VFALGSSAYPNFCAFGQYVDNILGELGGERLL) serves as a coordination point for FMN. Residues 928–1167 (AKAKPHNLTR…VRSALGFHLP (240 aa)) form the FAD-binding FR-type domain. Residues 957–968 (YEPGDHVGIFPA) and 1100–1110 (LQPRFYSISSS) each bind FAD. NADP(+)-binding positions include 1175 to 1193 (ILIG…WQEF) and 1273 to 1287 (GHIY…AEHV).

It belongs to the NOS family. It depends on heme b as a cofactor. FAD serves as cofactor. Requires FMN as cofactor.

It catalyses the reaction 2 L-arginine + 3 NADPH + 4 O2 + H(+) = 2 L-citrulline + 2 nitric oxide + 3 NADP(+) + 4 H2O. Its activity is regulated as follows. Stimulated by calcium/calmodulin. Catalyzes the conversion of L-arginine to L-citrulline producing nitric oxide (NO) which is a messenger molecule with diverse functions throughout the body. Truncated isoforms (isoform 3-isoform 6) are able to form intracellular complexes with the full-length protein and serve as dominant negative inhibitors of the enzyme activity. The chain is Nitric oxide synthase (Nos) from Drosophila melanogaster (Fruit fly).